The sequence spans 653 residues: Potassium voltage-gated channel subfamily A member 4 (653 aa).

The Cytoplasmic portion of the chain corresponds to 1–304 (MEVAMVSAES…LLFEYPESSS (304 aa)). The disordered stretch occupies residues 24 to 148 (QARARERERL…RFYYSEDDHG (125 aa)). Low complexity predominate over residues 36–52 (SRAAAAAAVAAATAAVE). A compositionally biased stretch (basic residues) spans 81-97 (GSRRRRRQRSEKKKAHY). The residue at position 90 (Ser-90) is a Phosphoserine; by PKA. A Phosphoserine modification is found at Ser-122. The segment covering 122–137 (SEEEEDEEEEEEEEEE) has biased composition (acidic residues). A helical transmembrane segment spans residues 305–326 (PARGIAIVSVLVILISIVIFCL). Over 327-370 (ETLPEFRDDRDLVMALSAGGHGGLLNDTSAPHLENSGHTIFNDP) the chain is Extracellular. Asn-352 carries N-linked (GlcNAc...) asparagine glycosylation. The chain crosses the membrane as a helical span at residues 371-392 (FFIVETVCIVWFSFEFVVRCFA). The Cytoplasmic segment spans residues 393–403 (CPSQALFFKNI). Residues 404–424 (MNIIDIVSILPYFITLGTDLA) traverse the membrane as a helical segment. Residues 425–439 (QQQGGGNGQQQQAMS) are Extracellular-facing. Residues 440–460 (FAILRIIRLVRVFRIFKLSRH) form a helical; Voltage-sensor membrane-spanning segment. Residues 461 to 475 (SKGLQILGHTLRASM) are Cytoplasmic-facing. The interval 462-475 (KGLQILGHTLRASM) is S4-S5 linker. Residues 476–497 (RELGLLIFFLFIGVILFSSAVY) form a helical membrane-spanning segment. Residues 498–511 (FAEADEPTTHFQSI) lie on the Extracellular side of the membrane. The helical intramembrane region spans 512-523 (PDAFWWAVVTMT). The Selectivity filter motif lies at 524-529 (TVGYGD). An intramembrane segment occupies 524–531 (TVGYGDMK). Over 532–538 (PITVGGK) the chain is Extracellular. Residues 539 to 567 (IVGSLCAIAGVLTIALPVPVIVSNFNYFY) traverse the membrane as a helical segment. Residues 568-653 (HRETENEEQT…SNAKAVETDV (86 aa)) are Cytoplasmic-facing. Ser-599 carries the post-translational modification Phosphoserine; by PKA. A compositionally biased stretch (basic and acidic residues) spans 629–640 (CQGKGDDSETDK). Positions 629–653 (CQGKGDDSETDKNNCSNAKAVETDV) are disordered. The PDZ-binding motif lies at 651–653 (TDV).

Belongs to the potassium channel family. A (Shaker) (TC 1.A.1.2) subfamily. Kv1.4/KCNA4 sub-subfamily. In terms of assembly, homotetramer and heterotetramer of potassium channel proteins. Interacts with KCNAB1 and KCNAB2. Interacts with DLG1, DLG2 and DLG4 via their PDZ domains. Interacts with SIGMAR1. Detected in a complex with KCNA1. Interacts with KCNA2. Part of a complex containing KCNA1, KCNAB1 and LGI1. Interacts (via cytoplasmic N-terminal domain) with KCNRG. Expressed in brain, and at lower levels in the testis, lung, kidney, colon and heart. Detected in heart ventricle.

The protein resides in the cell membrane. It is found in the cell projection. It localises to the axon. The enzyme catalyses K(+)(in) = K(+)(out). Its activity is regulated as follows. Inhibited by 4-aminopyridine (4-AP), but not by tetraethylammonium (TEA) and charybdotoxin (CTX). Voltage-gated potassium channel that mediates transmembrane potassium transport in excitable membranes. Forms tetrameric potassium-selective channels through which potassium ions pass in accordance with their electrochemical gradient. The channel alternates between opened and closed conformations in response to the voltage difference across the membrane. Can form functional homotetrameric channels and heterotetrameric channels that contain variable proportions of KCNA1, KCNA2, KCNA4, KCNA5, and possibly other family members as well; channel properties depend on the type of alpha subunits that are part of the channel. Channel properties are modulated by cytoplasmic beta subunits that regulate the subcellular location of the alpha subunits and promote rapid inactivation. In vivo, membranes probably contain a mixture of heteromeric potassium channel complexes, making it difficult to assign currents observed in intact tissues to any particular potassium channel family member. Homotetrameric KCNA4 forms a potassium channel that opens in response to membrane depolarization, followed by rapid spontaneous channel closure. Likewise, a heterotetrameric channel formed by KCNA1 and KCNA4 shows rapid inactivation. In Homo sapiens (Human), this protein is Potassium voltage-gated channel subfamily A member 4 (KCNA4).